The primary structure comprises 220 residues: Octanoyltransferase (220 aa).

The BPL/LPL catalytic domain occupies 31–206 (DDTPDEVWLV…ELVTLLDYEQ (176 aa)). Substrate contacts are provided by residues 70–77 (RGGQVTYH), 137–139 (SLG), and 150–152 (GLA). Cys-168 serves as the catalytic Acyl-thioester intermediate.

This sequence belongs to the LipB family.

The protein resides in the cytoplasm. It carries out the reaction octanoyl-[ACP] + L-lysyl-[protein] = N(6)-octanoyl-L-lysyl-[protein] + holo-[ACP] + H(+). It functions in the pathway protein modification; protein lipoylation via endogenous pathway; protein N(6)-(lipoyl)lysine from octanoyl-[acyl-carrier-protein]: step 1/2. Catalyzes the transfer of endogenously produced octanoic acid from octanoyl-acyl-carrier-protein onto the lipoyl domains of lipoate-dependent enzymes. Lipoyl-ACP can also act as a substrate although octanoyl-ACP is likely to be the physiological substrate. The chain is Octanoyltransferase from Vibrio campbellii (strain ATCC BAA-1116).